The following is a 263-amino-acid chain: E3 ubiquitin-protein ligase SINA-like 8 (263 aa).

Residues 35-71 form an RING-type; degenerate zinc finger; sequence CPICCEGLTCPIFQCENGHLACSSCCPKLRNKCPACP. The interval 75-261 is SBD; that stretch reads ILESILVTCP…IKLSIVETSN (187 aa). The SIAH-type zinc-finger motif lies at 78–136; the sequence is SILVTCPNDMFGCTESFLYGKKSTHEEECIFSLCSCPSLDCEYSGRYEDLYDHYKLTHI. Zn(2+)-binding residues include cysteine 83, cysteine 90, histidine 102, cysteine 106, cysteine 113, cysteine 118, histidine 130, and histidine 135.

It belongs to the SINA (Seven in absentia) family.

It catalyses the reaction S-ubiquitinyl-[E2 ubiquitin-conjugating enzyme]-L-cysteine + [acceptor protein]-L-lysine = [E2 ubiquitin-conjugating enzyme]-L-cysteine + N(6)-ubiquitinyl-[acceptor protein]-L-lysine.. It functions in the pathway protein modification; protein ubiquitination. In terms of biological role, E3 ubiquitin-protein ligase that mediates ubiquitination and subsequent proteasomal degradation of target proteins. E3 ubiquitin ligases accept ubiquitin from an E2 ubiquitin-conjugating enzyme in the form of a thioester and then directly transfers the ubiquitin to targeted substrates. It probably triggers the ubiquitin-mediated degradation of different substrates. The polypeptide is E3 ubiquitin-protein ligase SINA-like 8 (Arabidopsis thaliana (Mouse-ear cress)).